The sequence spans 883 residues: Chromatin structure-remodeling complex protein RSC30 (883 aa).

A DNA-binding region (zn(2)-C6 fungal-type) is located at residues 14–45; sequence ACTQCRKRKIGCDRAKPICGNCVKYNKPDCFY. 2 disordered regions span residues 121–157 and 241–273; these read QNNN…DVPS and NTTA…TSRT. The segment covering 130–149 has biased composition (polar residues); it reads APRQNSSTVSSNVHGNTIVR. Residue serine 150 is modified to Phosphoserine. The span at 241–251 shows a compositional bias: polar residues; that stretch reads NTTANKINKTG. A compositionally biased stretch (basic and acidic residues) spans 252 to 270; that stretch reads ENSKKGKVDGKRAGFDHQT.

In terms of assembly, forms a heteromer with RSC3. Interacts with NPL6. Component of the two forms of the RSC complex composed of at least either RSC1 or RSC2, and ARP7, ARP9, LDB7, NPL6, RSC3, RSC30, RSC4, RSC58, RSC6, RSC8, RSC9, SFH1, STH1, HTL1 and probably RTT102. The complexes interact with histone and histone variant components of centromeric chromatin. Component of a fungal-specific module (HTL1-LDB7-NPL6-RSC3-RSC30) within the RSC complex.

It is found in the nucleus. In terms of biological role, component of the chromatin structure-remodeling complex (RSC), which is involved in transcription regulation and nucleosome positioning. RSC is responsible for the transfer of a histone octamer from a nucleosome core particle to naked DNA. The reaction requires ATP and involves an activated RSC-nucleosome intermediate. Remodeling reaction also involves DNA translocation, DNA twist and conformational change. As a reconfigurer of centromeric and flanking nucleosomes, RSC complex is required both for proper kinetochore function in chromosome segregation and, via a PKC1-dependent signaling pathway, for organization of the cellular cytoskeleton. This subunit is required for transcription of ribosomal protein genes and genes involved in the integrity of the cell wall. Together with HTL1, LDB7, NPL6, RSC3 components, defines a fungal-specific module within the RSC complex that plays a role in many cellular functions including the maintenance of cell wall integrity. In Saccharomyces cerevisiae (strain ATCC 204508 / S288c) (Baker's yeast), this protein is Chromatin structure-remodeling complex protein RSC30 (RSC30).